The primary structure comprises 279 residues: Probable endonuclease 4 (279 aa).

Zn(2+) is bound by residues H67, H107, E144, D177, H180, H214, D227, H229, and E259.

It belongs to the AP endonuclease 2 family. Zn(2+) serves as cofactor.

The catalysed reaction is Endonucleolytic cleavage to 5'-phosphooligonucleotide end-products.. Functionally, endonuclease IV plays a role in DNA repair. It cleaves phosphodiester bonds at apurinic or apyrimidinic (AP) sites, generating a 3'-hydroxyl group and a 5'-terminal sugar phosphate. In Sulfurihydrogenibium sp. (strain YO3AOP1), this protein is Probable endonuclease 4.